We begin with the raw amino-acid sequence, 655 residues long: tRNA uridine 5-carboxymethylaminomethyl modification enzyme MnmG (655 aa).

Residue 13–18 (GGGHAG) participates in FAD binding. 281 to 295 (GPRYCPSVEDKINRF) is an NAD(+) binding site.

This sequence belongs to the MnmG family. In terms of assembly, homodimer. Heterotetramer of two MnmE and two MnmG subunits. Requires FAD as cofactor.

The protein resides in the cytoplasm. NAD-binding protein involved in the addition of a carboxymethylaminomethyl (cmnm) group at the wobble position (U34) of certain tRNAs, forming tRNA-cmnm(5)s(2)U34. This Paracidovorax citrulli (strain AAC00-1) (Acidovorax citrulli) protein is tRNA uridine 5-carboxymethylaminomethyl modification enzyme MnmG.